Consider the following 564-residue polypeptide: Hexose transporter HXT13 (564 aa).

The Cytoplasmic segment spans residues 1–52 (MSSAQSSIDSDGDVRDADIHVAPPVEKEWSDGFDDNEVINGDNVEPPKRGLI). The helical transmembrane segment at 53–73 (GYLVIYLLCYPISFGGFLPGW) threads the bilayer. Topologically, residues 74–109 (DSGITAGFINMDNFKMNFGSYKHSTGEYYLSNVRMG) are extracellular. Residues 110-130 (LLVAMFSIGCAIGGLIFARLA) traverse the membrane as a helical segment. The Cytoplasmic portion of the chain corresponds to 131–136 (DTLGRR). The helical transmembrane segment at 137 to 157 (LAIVIVVLVYMVGAIIQISSN) threads the bilayer. Residues 158 to 167 (HKWYQYFVGK) lie on the Extracellular side of the membrane. A helical membrane pass occupies residues 168–188 (IIYGLGAGGCSVLCPMLLSEI). The Cytoplasmic portion of the chain corresponds to 189–194 (APTDLR). A helical transmembrane segment spans residues 195–215 (GGLVSLYQLNMTFGIFLGYCS). The Extracellular portion of the chain corresponds to 216–229 (VYGTRKYDNTAQWR). Residues 230–250 (VPLGLCFLWALIIIIGMLLVP) traverse the membrane as a helical segment. Residues 251 to 333 (ESPRYLIECE…VQTFLQLTGE (83 aa)) lie on the Cytoplasmic side of the membrane. A helical transmembrane segment spans residues 334–350 (NYFFFYGTTIFKSVGLT). The Extracellular portion of the chain corresponds to 351–356 (DGFETS). Residues 357–374 (IVLGTVNFFSTIIAVMVV) traverse the membrane as a helical segment. Topologically, residues 375–381 (DKIGRRK) are cytoplasmic. A helical transmembrane segment spans residues 382–402 (CLLFGAAGMMACMVIFASIGV). At 403-424 (KCLYPHGQDGPSSKGAGNAMIV) the chain is on the extracellular side. The helical transmembrane segment at 425 to 445 (FTCFYIFCFATTWAPVAYIVV) threads the bilayer. Over 446–462 (AESFPSKVKSRAMSIST) the chain is Cytoplasmic. Residues 463 to 483 (ACNWLWQFLIGFFTPFITGSI) traverse the membrane as a helical segment. His-484 is a topological domain (extracellular). A helical transmembrane segment spans residues 485 to 505 (FYYGYVFVGCLVAMFLYVFFF). Topologically, residues 506 to 564 (LPETIGLSLEEIQLLYEEGIKPWKSASWVPPSRRGISSEESKTEKKDWKKFLKFSKNSD) are cytoplasmic. Positions 530 to 551 (SASWVPPSRRGISSEESKTEKK) are disordered. A compositionally biased stretch (basic and acidic residues) spans 541 to 551 (ISSEESKTEKK).

It belongs to the major facilitator superfamily. Sugar transporter (TC 2.A.1.1) family.

The protein localises to the membrane. Probable glucose transporter. The protein is Hexose transporter HXT13 (HXT13) of Saccharomyces cerevisiae (strain ATCC 204508 / S288c) (Baker's yeast).